The following is a 218-amino-acid chain: Ras-related protein Rab-4A (218 aa).

GTP is bound by residues G23, T24, G25, K26, S27, C28, S42, H44, and T45. A Mg(2+)-binding site is contributed by S27. A Switch 1 motif is present at residues 44–49 (HTIGVE). 2 residues coordinate Mg(2+): T45 and D68. The Switch 2 motif lies at 70–79 (AGQERFRSVT). Position 71 (G71) interacts with GTP. Q72 carries the 5-glutamyl serotonin modification. GTP is bound by residues N126, K127, D129, A157, and L158. Residue S190 is modified to Phosphoserine. S204 carries the phosphoserine; by CDK1 modification. 2 S-geranylgeranyl cysteine lipidation sites follow: C216 and C218. C218 carries the post-translational modification Cysteine methyl ester.

The protein belongs to the small GTPase superfamily. Rab family. In terms of assembly, interacts with SGSM1, SGSM2 and SGSM3. Interacts with RAB11FIP1, RABEP1, ZFYVE20 and RUFY1. Interacts (membrane-bound form) with NDRG1; the interaction involves NDRG1 in vesicular recycling of E-cadherin. Interacts (in GTP-bound form) with GRIPAP1 (via N-terminus). Interacts with RABEP1 and RBSN. Does not interact with HPS4. Interacts with RABEP2; this interaction may mediate VEGFR2 cell surface expression. It depends on Mg(2+) as a cofactor. In terms of processing, serotonylation of Gln-72 by TGM2 during activation and aggregation of platelets leads to constitutive activation of GTPase activity. Phosphorylated by CDK1 kinase during mitosis.

It localises to the membrane. The protein localises to the cytoplasm. The protein resides in the early endosome membrane. Its subcellular location is the recycling endosome membrane. It catalyses the reaction GTP + H2O = GDP + phosphate + H(+). Its activity is regulated as follows. Regulated by guanine nucleotide exchange factors (GEFs) which promote the exchange of bound GDP for free GTP. Regulated by GTPase activating proteins (GAPs) which increase the GTP hydrolysis activity. Inhibited by GDP dissociation inhibitors (GDIs). Functionally, the small GTPases Rab are key regulators of intracellular membrane trafficking, from the formation of transport vesicles to their fusion with membranes. Rabs cycle between an inactive GDP-bound form and an active GTP-bound form that is able to recruit to membranes different sets of downstream effectors directly responsible for vesicle formation, movement, tethering and fusion. RAB4A is involved in protein transport. Also plays a role in vesicular traffic. Mediates VEGFR2 endosomal trafficking to enhance VEGFR2 signaling. Acts as a regulator of platelet alpha-granule release during activation and aggregation of platelets. The polypeptide is Ras-related protein Rab-4A (Rattus norvegicus (Rat)).